A 393-amino-acid chain; its full sequence is Homoserine O-succinyltransferase (393 aa).

One can recognise an AB hydrolase-1 domain in the interval 62–372; sequence NAVLVCHALN…PHGHDAFLLD (311 aa). Catalysis depends on Ser168, which acts as the Nucleophile. Arg238 is a binding site for substrate. Catalysis depends on residues Asp333 and His366. Residue Asp367 coordinates substrate.

It belongs to the AB hydrolase superfamily. MetX family. As to quaternary structure, homodimer.

Its subcellular location is the cytoplasm. It carries out the reaction L-homoserine + succinyl-CoA = O-succinyl-L-homoserine + CoA. Its pathway is amino-acid biosynthesis; L-methionine biosynthesis via de novo pathway; O-succinyl-L-homoserine from L-homoserine: step 1/1. Its function is as follows. Transfers a succinyl group from succinyl-CoA to L-homoserine, forming succinyl-L-homoserine. The polypeptide is Homoserine O-succinyltransferase (Cupriavidus taiwanensis (strain DSM 17343 / BCRC 17206 / CCUG 44338 / CIP 107171 / LMG 19424 / R1) (Ralstonia taiwanensis (strain LMG 19424))).